A 340-amino-acid chain; its full sequence is tRNA N6-adenosine threonylcarbamoyltransferase (340 aa).

Histidine 111 and histidine 115 together coordinate Fe cation. Residues 134–138, aspartate 167, glycine 180, and asparagine 273 each bind substrate; that span reads IISGA. Aspartate 301 serves as a coordination point for Fe cation.

It belongs to the KAE1 / TsaD family. It depends on Fe(2+) as a cofactor.

The protein resides in the cytoplasm. The enzyme catalyses L-threonylcarbamoyladenylate + adenosine(37) in tRNA = N(6)-L-threonylcarbamoyladenosine(37) in tRNA + AMP + H(+). Required for the formation of a threonylcarbamoyl group on adenosine at position 37 (t(6)A37) in tRNAs that read codons beginning with adenine. Is involved in the transfer of the threonylcarbamoyl moiety of threonylcarbamoyl-AMP (TC-AMP) to the N6 group of A37, together with TsaE and TsaB. TsaD likely plays a direct catalytic role in this reaction. The protein is tRNA N6-adenosine threonylcarbamoyltransferase of Wigglesworthia glossinidia brevipalpis.